The following is a 437-amino-acid chain: Xylose isomerase (437 aa).

Residues His-102 and Asp-105 contribute to the active site. Mg(2+) is bound by residues Glu-233, Glu-269, His-272, Asp-297, Asp-308, Asp-310, and Asp-340.

Belongs to the xylose isomerase family. Homotetramer. Mg(2+) is required as a cofactor.

It is found in the cytoplasm. It carries out the reaction alpha-D-xylose = alpha-D-xylulofuranose. In Novosphingobium aromaticivorans (strain ATCC 700278 / DSM 12444 / CCUG 56034 / CIP 105152 / NBRC 16084 / F199), this protein is Xylose isomerase.